A 352-amino-acid polypeptide reads, in one-letter code: C-C chemokine receptor type 5 (352 aa).

At Met1 to Ala30 the chain is on the extracellular side. Tyr3 is modified (sulfotyrosine). Residues Ser6 and Ser7 are each glycosylated (O-linked (GalNAc...) serine). Tyr10 and Tyr14 each carry sulfotyrosine. Cystine bridges form between Cys20/Cys269 and Cys101/Cys178. The chain crosses the membrane as a helical span at residues Gln31–Cys58. The Cytoplasmic segment spans residues Lys59 to Tyr68. Residues Leu69 to Tyr89 form a helical membrane-spanning segment. Over Ala90–Gln102 the chain is Extracellular. The helical transmembrane segment at Phe103–Ile124 threads the bilayer. Residues Asp125–Thr141 are Cytoplasmic-facing. The helical transmembrane segment at Val142–Phe166 threads the bilayer. The Extracellular segment spans residues Thr167–Met198. Residues Val199–Leu218 form a helical membrane-spanning segment. Topologically, residues Lys219–Arg235 are cytoplasmic. A helical membrane pass occupies residues Leu236–Tyr260. Over Pro261–Gln277 the chain is Extracellular. A helical transmembrane segment spans residues Ala278–Gly301. The Cytoplasmic portion of the chain corresponds to Glu302–Leu352. 3 S-palmitoyl cysteine lipidation sites follow: Cys321, Cys323, and Cys324. Residues Ser337, Ser342, and Ser349 each carry the phosphoserine; by BARK1 modification.

The protein belongs to the G-protein coupled receptor 1 family. Interacts with PRAF2. Efficient ligand binding to CCL3/MIP-1alpha and CCL4/MIP-1beta requires sulfation, O-glycosylation and sialic acid modifications. Glycosylation on Ser-6 is required for efficient binding of CCL4. Interacts with GRK2. Interacts with ARRB1 and ARRB2. Interacts with CNIH4. Interacts with S100A4; this interaction stimulates T-lymphocyte chemotaxis. Sulfated on at least 2 of the N-terminal tyrosines. Sulfation is required for efficient binding of the chemokines, CCL3 and CCL4. In terms of processing, palmitoylation in the C-terminal is important for cell surface expression. Post-translationally, phosphorylation on serine residues in the C-terminal is stimulated by binding CC chemokines especially by APO-RANTES. O-glycosylated, but not N-glycosylated. Ser-6 appears to be the major site even if Ser-7 may be also O-glycosylated. Also sialylated glycans present which contribute to chemokine binding. Ser-17 may also be glycosylated and, if so, with small moieties such as a T-antigen.

It localises to the cell membrane. Receptor for a number of inflammatory CC-chemokines including CCL3/MIP-1-alpha, CCL4/MIP-1-beta and RANTES and subsequently transduces a signal by increasing the intracellular calcium ion level. May play a role in the control of granulocytic lineage proliferation or differentiation. Participates in T-lymphocyte migration to the infection site by acting as a chemotactic receptor. This chain is C-C chemokine receptor type 5 (CCR5), found in Saimiri sciureus (Common squirrel monkey).